The sequence spans 101 residues: Putative pterin-4-alpha-carbinolamine dehydratase (101 aa).

The protein belongs to the pterin-4-alpha-carbinolamine dehydratase family.

It catalyses the reaction (4aS,6R)-4a-hydroxy-L-erythro-5,6,7,8-tetrahydrobiopterin = (6R)-L-erythro-6,7-dihydrobiopterin + H2O. The chain is Putative pterin-4-alpha-carbinolamine dehydratase from Rhizobium rhizogenes (strain K84 / ATCC BAA-868) (Agrobacterium radiobacter).